The primary structure comprises 98 residues: NADH-ubiquinone oxidoreductase chain 4L (98 aa).

Transmembrane regions (helical) follow at residues 1-21, 27-47, and 61-81; these read MIPTYMNIMLAFTISLLGMLT, VASLLCLEGMMMSLFIMATLI, and IILLVFAACEAAVGLALLISI.

This sequence belongs to the complex I subunit 4L family. Core subunit of respiratory chain NADH dehydrogenase (Complex I) which is composed of 45 different subunits.

It is found in the mitochondrion inner membrane. The catalysed reaction is a ubiquinone + NADH + 5 H(+)(in) = a ubiquinol + NAD(+) + 4 H(+)(out). Core subunit of the mitochondrial membrane respiratory chain NADH dehydrogenase (Complex I) which catalyzes electron transfer from NADH through the respiratory chain, using ubiquinone as an electron acceptor. Part of the enzyme membrane arm which is embedded in the lipid bilayer and involved in proton translocation. This chain is NADH-ubiquinone oxidoreductase chain 4L (MT-ND4L), found in Macaca hecki (Heck's macaque).